The sequence spans 317 residues: Type II methyltransferase M.MgeORF184P (317 aa).

Belongs to the N(4)/N(6)-methyltransferase family.

The enzyme catalyses a 2'-deoxyadenosine in DNA + S-adenosyl-L-methionine = an N(6)-methyl-2'-deoxyadenosine in DNA + S-adenosyl-L-homocysteine + H(+). Its function is as follows. Probably recognizes the double-stranded sequence 5'-CTAT-3' and methylates A-3 on only one strand; as the bacterial DNA is methylated on this sequence and this is the only type II methylase in the genome, it is probably responsible for all of the methylation on this site in the genome. The chain is Type II methyltransferase M.MgeORF184P from Mycoplasma genitalium (strain ATCC 33530 / DSM 19775 / NCTC 10195 / G37) (Mycoplasmoides genitalium).